We begin with the raw amino-acid sequence, 215 residues long: Pyrrolidone-carboxylate peptidase (215 aa).

Residues E80, C143, and H167 contribute to the active site.

The protein belongs to the peptidase C15 family. Homotetramer.

It is found in the cytoplasm. It catalyses the reaction Release of an N-terminal pyroglutamyl group from a polypeptide, the second amino acid generally not being Pro.. Removes 5-oxoproline from various penultimate amino acid residues except L-proline. The protein is Pyrrolidone-carboxylate peptidase of Bacillus cytotoxicus (strain DSM 22905 / CIP 110041 / 391-98 / NVH 391-98).